Reading from the N-terminus, the 1274-residue chain is DENN domain-containing protein 3 (1274 aa).

Positions 65–108 (GQVPGASCALGKGRRRSFRKKREKPRMEPWKSHPGDSKGPDSED) are disordered. Residues 75-245 (GKGRRRSFRK…LIPSPPPGPL (171 aa)) form the uDENN domain. Basic residues predominate over residues 76–88 (KGRRRSFRKKREK). Over residues 89-105 (PRMEPWKSHPGDSKGPD) the composition is skewed to basic and acidic residues. Residues 268-400 (IVDLDLHLPL…PLLLAQTFIQ (133 aa)) enclose the cDENN domain. One can recognise a dDENN domain in the interval 402–506 (VQSLQLHPDL…KARLNGRMDA (105 aa)). Residues 520–970 (RIDRMLISPR…KHKINPSAGE (451 aa)) are linker. A phosphoserine; by ULK1 mark is found at S554 and S572. Residue Y940 is modified to Phosphotyrosine. 7 WD repeats span residues 975-1013 (AIEVLLYTPGRLDPAEKVEDAHPKLWCALNEGKVVVFDA), 1019-1055 (HQHCFKVGSSKVNCMVMAEHNQVWVGSEDSVIYIINV), 1059-1099 (SCNK…AWNV), 1103-1140 (RVISRFQLSYGDLLSISLHNDRIWCCTVHKILVVTPQG), 1146-1181 (LKHPKDASFLAFQLLPEEQQLWAASTGVSELYMWSL), 1186-1228 (QPPQ…IYVM), and 1234-1273 (TVEKELVAHLDTVRTLCSAEDRYVLSGAGQEEGKIAIWKV).

As to quaternary structure, forms oligomers. Interacts with 6 of the 7 known isoforms of 14-3-3 proteins.

The protein localises to the cytoplasm. Functionally, guanine nucleotide exchange factor (GEF) activating Rab12. Promotes the exchange of GDP to GTP, converting inactive GDP-bound Rab12 into its active GTP-bound form. Regulates autophagy in response to starvation through Rab12 activation. Starvation leads to ULK1/2-dependent phosphorylation of Ser-554 and Ser-572, which in turn allows recruitment of 14-3-3 adapter proteins and leads to up-regulation of GEF activity towards Rab12. Also plays a role in protein transport from recycling endosomes to lysosomes, regulating, for instance, the degradation of the transferrin receptor and of the amino acid transporter PAT4. Starvation also induces phosphorylation at Tyr-940, which leads to up-regulated GEF activity and initiates autophagy. The chain is DENN domain-containing protein 3 (Dennd3) from Mus musculus (Mouse).